Here is a 481-residue protein sequence, read N- to C-terminus: 2-methylisoborneol synthase (481 aa).

Disordered stretches follow at residues 1-125 and 139-160; these read MPDS…PVGP and QAAV…GPVV. A compositionally biased stretch (pro residues) spans 11-23; it reads TSLPEQPPAPPAT. Residues 24–33 are compositionally biased toward low complexity; that stretch reads APDAPAATVT. Composition is skewed to pro residues over residues 52–64 and 71–104; these read VTRP…PSMP and SSPP…PPAT. Positions 105-114 are enriched in low complexity; it reads APETSAATGS. Residues aspartate 238, aspartate 239, glutamate 243, asparagine 386, serine 390, and glutamate 394 each coordinate Mg(2+).

The protein belongs to the terpene synthase family. 2-methylisoborneol synthase subfamily. It depends on Mg(2+) as a cofactor.

The catalysed reaction is (E)-2-methylgeranyl diphosphate + H2O = 2-methylisoborneol + diphosphate. Catalyzes the cyclization of 2-methylgeranyl diphosphate (2-MeGPP) to 2-methylisoborneol (2-MIB), which likely involves the intermediacy of 2-methyllinalyl diphosphate. The chain is 2-methylisoborneol synthase (tpc) from Streptomyces lasalocidi (Streptomyces lasaliensis).